The following is a 274-amino-acid chain: Hydroxyethylthiazole kinase (274 aa).

Met50 contributes to the substrate binding site. ATP is bound by residues Arg126 and Ser171. Position 200 (Ala200) interacts with substrate.

It belongs to the Thz kinase family. The cofactor is Mg(2+).

The enzyme catalyses 5-(2-hydroxyethyl)-4-methylthiazole + ATP = 4-methyl-5-(2-phosphooxyethyl)-thiazole + ADP + H(+). It participates in cofactor biosynthesis; thiamine diphosphate biosynthesis; 4-methyl-5-(2-phosphoethyl)-thiazole from 5-(2-hydroxyethyl)-4-methylthiazole: step 1/1. Functionally, catalyzes the phosphorylation of the hydroxyl group of 4-methyl-5-beta-hydroxyethylthiazole (THZ). The polypeptide is Hydroxyethylthiazole kinase (Acinetobacter baylyi (strain ATCC 33305 / BD413 / ADP1)).